The primary structure comprises 940 residues: Valine--tRNA ligase (940 aa).

Positions 47–57 match the 'HIGH' region motif; sequence PNVTGILHMGH. The short motif at 564–568 is the 'KMSKS' region element; the sequence is KLSKS. K567 is a binding site for ATP. The stretch at 873-937 forms a coiled coil; that stretch reads VEHIAKEKTR…ELQSILDKLA (65 aa).

Belongs to the class-I aminoacyl-tRNA synthetase family. ValS type 1 subfamily. In terms of assembly, monomer.

Its subcellular location is the cytoplasm. It carries out the reaction tRNA(Val) + L-valine + ATP = L-valyl-tRNA(Val) + AMP + diphosphate. Functionally, catalyzes the attachment of valine to tRNA(Val). As ValRS can inadvertently accommodate and process structurally similar amino acids such as threonine, to avoid such errors, it has a 'posttransfer' editing activity that hydrolyzes mischarged Thr-tRNA(Val) in a tRNA-dependent manner. The sequence is that of Valine--tRNA ligase from Chlamydia abortus (strain DSM 27085 / S26/3) (Chlamydophila abortus).